The primary structure comprises 425 residues: Serine--tRNA ligase (425 aa).

230–232 is an L-serine binding site; sequence TAE. Residue 261–263 coordinates ATP; that stretch reads RSE. An L-serine-binding site is contributed by Glu-284. Residue 348–351 participates in ATP binding; it reads EISS. L-serine is bound at residue Ser-384.

This sequence belongs to the class-II aminoacyl-tRNA synthetase family. Type-1 seryl-tRNA synthetase subfamily. Homodimer. The tRNA molecule binds across the dimer.

It is found in the cytoplasm. The enzyme catalyses tRNA(Ser) + L-serine + ATP = L-seryl-tRNA(Ser) + AMP + diphosphate + H(+). It carries out the reaction tRNA(Sec) + L-serine + ATP = L-seryl-tRNA(Sec) + AMP + diphosphate + H(+). Its pathway is aminoacyl-tRNA biosynthesis; selenocysteinyl-tRNA(Sec) biosynthesis; L-seryl-tRNA(Sec) from L-serine and tRNA(Sec): step 1/1. Functionally, catalyzes the attachment of serine to tRNA(Ser). Is also able to aminoacylate tRNA(Sec) with serine, to form the misacylated tRNA L-seryl-tRNA(Sec), which will be further converted into selenocysteinyl-tRNA(Sec). The polypeptide is Serine--tRNA ligase (Streptococcus pyogenes serotype M5 (strain Manfredo)).